The following is a 406-amino-acid chain: Homocysteine-responsive endoplasmic reticulum-resident ubiquitin-like domain member 2 protein (406 aa).

One can recognise a Ubiquitin-like domain in the interval 10–89 (VTLIIKAPNQ…HMVHLVCTSR (80 aa)). The segment at 86 to 156 (CTSRTPPSSP…PQAQTDPAQS (71 aa)) is disordered. Composition is skewed to low complexity over residues 87 to 98 (TSRTPPSSPKSS) and 109 to 139 (SNSN…SSSE). The segment covering 145 to 156 (TLPQAQTDPAQS) has biased composition (polar residues). The helical transmembrane segment at 302–322 (FIMVMGAMLLVYLHQAGWFPF) threads the bilayer.

Its subcellular location is the membrane. In terms of biological role, could be involved in the unfolded protein response (UPR) pathway. The protein is Homocysteine-responsive endoplasmic reticulum-resident ubiquitin-like domain member 2 protein (HERPUD2) of Bos taurus (Bovine).